The primary structure comprises 426 residues: Glucose-6-phosphate isomerase (426 aa).

The Proton donor role is filled by Glu-276. Active-site residues include His-297 and Lys-413.

Belongs to the GPI family.

It is found in the cytoplasm. The catalysed reaction is alpha-D-glucose 6-phosphate = beta-D-fructose 6-phosphate. It participates in carbohydrate biosynthesis; gluconeogenesis. Its pathway is carbohydrate degradation; glycolysis; D-glyceraldehyde 3-phosphate and glycerone phosphate from D-glucose: step 2/4. Functionally, catalyzes the reversible isomerization of glucose-6-phosphate to fructose-6-phosphate. The sequence is that of Glucose-6-phosphate isomerase from Mesoplasma florum (strain ATCC 33453 / NBRC 100688 / NCTC 11704 / L1) (Acholeplasma florum).